The sequence spans 98 residues: Protein translation factor SUI1 homolog (98 aa).

This sequence belongs to the SUI1 family.

The protein is Protein translation factor SUI1 homolog of Pyrococcus furiosus (strain ATCC 43587 / DSM 3638 / JCM 8422 / Vc1).